We begin with the raw amino-acid sequence, 298 residues long: Glycine--tRNA ligase alpha subunit (298 aa).

It belongs to the class-II aminoacyl-tRNA synthetase family. As to quaternary structure, tetramer of two alpha and two beta subunits.

It localises to the cytoplasm. It catalyses the reaction tRNA(Gly) + glycine + ATP = glycyl-tRNA(Gly) + AMP + diphosphate. The protein is Glycine--tRNA ligase alpha subunit of Helicobacter pylori (strain G27).